Consider the following 449-residue polypeptide: Methylenetetrahydrofolate--tRNA-(uracil-5-)-methyltransferase TrmFO (449 aa).

FAD is bound at residue 9–14 (GGGIAG).

It belongs to the MnmG family. TrmFO subfamily. It depends on FAD as a cofactor.

The protein localises to the cytoplasm. The catalysed reaction is uridine(54) in tRNA + (6R)-5,10-methylene-5,6,7,8-tetrahydrofolate + NADH + H(+) = 5-methyluridine(54) in tRNA + (6S)-5,6,7,8-tetrahydrofolate + NAD(+). The enzyme catalyses uridine(54) in tRNA + (6R)-5,10-methylene-5,6,7,8-tetrahydrofolate + NADPH + H(+) = 5-methyluridine(54) in tRNA + (6S)-5,6,7,8-tetrahydrofolate + NADP(+). Catalyzes the folate-dependent formation of 5-methyl-uridine at position 54 (M-5-U54) in all tRNAs. The protein is Methylenetetrahydrofolate--tRNA-(uracil-5-)-methyltransferase TrmFO of Gloeobacter violaceus (strain ATCC 29082 / PCC 7421).